The following is a 399-amino-acid chain: Elongation factor Tu (399 aa).

In terms of domain architecture, tr-type G spans 10 to 204 (KPHVNIGTIG…AVDASIPEPE (195 aa)). The interval 19 to 26 (GHVDHGKT) is G1. Position 19-26 (19-26 (GHVDHGKT)) interacts with GTP. Mg(2+) is bound at residue threonine 26. Positions 60–64 (GITIN) are G2. The segment at 81–84 (DCPG) is G3. GTP is bound by residues 81-85 (DCPGH) and 136-139 (NKCD). The segment at 136–139 (NKCD) is G4. The tract at residues 174 to 176 (SGL) is G5.

Belongs to the TRAFAC class translation factor GTPase superfamily. Classic translation factor GTPase family. EF-Tu/EF-1A subfamily. As to quaternary structure, monomer.

Its subcellular location is the cytoplasm. It catalyses the reaction GTP + H2O = GDP + phosphate + H(+). Functionally, GTP hydrolase that promotes the GTP-dependent binding of aminoacyl-tRNA to the A-site of ribosomes during protein biosynthesis. The protein is Elongation factor Tu of Prochlorococcus marinus (strain MIT 9313).